The primary structure comprises 97 residues: MTCFLVRDLLPLYLEGDCKRETEHVIEEHLKMCSSCRDMYDTMAEPFELESEQAVEEAYLPEEELRFKQRYYGLLIMKAACWFGAAVAMMLIIKLLI.

Residues His-29, Cys-33, and Cys-36 each coordinate Zn(2+). Residues 71 to 93 form a helical membrane-spanning segment; the sequence is YYGLLIMKAACWFGAAVAMMLII.

It belongs to the zinc-associated anti-sigma factor (ZAS) superfamily. Zn(2+) is required as a cofactor.

Its subcellular location is the cell membrane. Its function is as follows. Anti-sigma factor for YlaC. The polypeptide is Anti-sigma-YlaC factor YlaD (ylaD) (Bacillus subtilis (strain 168)).